The sequence spans 485 residues: Warthog protein 1 (485 aa).

The first 21 residues, 1 to 21, serve as a signal peptide directing secretion; that stretch reads MMVMNPLTATFLAALIGTAAS. Residues 236-258 form a disordered region; sequence DQRLSPSTDVQSDSYVSPTEADP. Polar residues predominate over residues 239–252; sequence LSPSTDVQSDSYVS.

It belongs to the hedgehog family. In terms of processing, the C-terminal domain displays an autoproteolysis activity.

It localises to the secreted. It is found in the cell surface. The protein localises to the cell membrane. The protein resides in the extracellular space. Functionally, intercellular signal essential for a variety of patterning events during development. This Caenorhabditis elegans protein is Warthog protein 1 (wrt-1).